Consider the following 199-residue polypeptide: NADH-ubiquinone oxidoreductase chain 6 (199 aa).

Helical transmembrane passes span 1–21, 27–47, 49–69, 87–107, and 150–170; these read MILFYVFVVLALVSGAMVIRA, SVLFLILVFCNTSGLLVLLGL, FFAMIFLVVYVGAIAVLFLFV, YLPVGGIIGLIFLLEIFLMVD, and FFLFLVSSLILLVALIGAIVL.

It belongs to the complex I subunit 6 family.

The protein resides in the mitochondrion membrane. It catalyses the reaction a ubiquinone + NADH + 5 H(+)(in) = a ubiquinol + NAD(+) + 4 H(+)(out). In terms of biological role, core subunit of the mitochondrial membrane respiratory chain NADH dehydrogenase (Complex I) that is believed to belong to the minimal assembly required for catalysis. Complex I functions in the transfer of electrons from NADH to the respiratory chain. The immediate electron acceptor for the enzyme is believed to be ubiquinone. The protein is NADH-ubiquinone oxidoreductase chain 6 (ND6) of Marchantia polymorpha (Common liverwort).